The chain runs to 377 residues: Dihydroorotate dehydrogenase (quinone) (377 aa).

FMN contacts are provided by residues 68 to 72 (AGFDK) and Thr-92. Lys-72 is a substrate binding site. 117 to 121 (NRMGF) provides a ligand contact to substrate. FMN is bound by residues Asn-149 and Asn-182. Asn-182 serves as a coordination point for substrate. Residue Ser-185 is the Nucleophile of the active site. Residue Asn-187 participates in substrate binding. Lys-224 and Thr-252 together coordinate FMN. A substrate-binding site is contributed by 253–254 (NT). FMN-binding positions include Gly-278, Gly-307, and 328 to 329 (YT).

It belongs to the dihydroorotate dehydrogenase family. Type 2 subfamily. In terms of assembly, monomer. Requires FMN as cofactor.

It localises to the cell membrane. The catalysed reaction is (S)-dihydroorotate + a quinone = orotate + a quinol. It participates in pyrimidine metabolism; UMP biosynthesis via de novo pathway; orotate from (S)-dihydroorotate (quinone route): step 1/1. Functionally, catalyzes the conversion of dihydroorotate to orotate with quinone as electron acceptor. The chain is Dihydroorotate dehydrogenase (quinone) from Thermobifida fusca (strain YX).